A 1059-amino-acid chain; its full sequence is Mitogen-activated protein kinase kinase kinase mlk-1 (1059 aa).

The disordered stretch occupies residues 1-66 (MEQASVPSYV…ESSQVSRESP (66 aa)). Residues 38-48 (DTTTASTSTDS) are compositionally biased toward low complexity. An SH3 domain is found at 69 to 130 (RASKAFVASY…PSNYAREVTY (62 aa)). The region spanning 150-454 (TLSDCQIGHG…TLAISFKQYA (305 aa)) is the Protein kinase domain. Residues 156-164 (IGHGATATV) and K193 each bind ATP. Residues 199–224 (ASNFRADVVSTDEQLEQLKREANLVN) are a coiled coil. D297 acts as the Proton acceptor in catalysis. The residue at position 355 (S355) is a Phosphoserine; by max-2 and tpa-1. 2 disordered regions span residues 617–699 (PVVS…QTTR) and 714–808 (RAQS…SSSD). A compositionally biased stretch (polar residues) spans 623–633 (MDDSNTFSTID). Basic and acidic residues-rich tracts occupy residues 639-648 (DPNHSKESKK) and 662-674 (NKRDSKEDHDERA). The segment covering 678–689 (SISSRSSSTTSS) has biased composition (low complexity). The span at 690-699 (NRLITGQTTR) shows a compositional bias: polar residues. Residues 749-759 (RYVKDLEKDTP) are compositionally biased toward basic and acidic residues. 2 stretches are compositionally biased toward polar residues: residues 774–790 (LDQTIPASPNSPDSINN) and 798–808 (SRRTTANSSSD). The NPQY motif signature appears at 937–940 (NPQY). Position 940 is a phosphotyrosine (Y940).

It belongs to the protein kinase superfamily. STE Ser/Thr protein kinase family. MAP kinase kinase kinase subfamily. Interacts with max-2; the interaction is independent of max-2 and mlk-1 kinase activities. May interact (via NPQY motif when phosphorylated on tyrosine residue) with shc-1 (via PID domain); the interaction may facilitate mek-1 phosphorylation by bringing mlk-1 and mek-1 together. Interacts with svh-2 (via cytoplasmic domain). Interacts with tpa-1. Mg(2+) serves as cofactor. May be phosphorylated on tyrosine residues by svh-2. Post-translationally, may be ubiquitinated and targeted for proteasomal degradation by E3 ubiquitin ligase rpm-1. Expressed in pharynx, intestine, hypodermis, neurons and body muscles.

It carries out the reaction L-seryl-[protein] + ATP = O-phospho-L-seryl-[protein] + ADP + H(+). It catalyses the reaction L-threonyl-[protein] + ATP = O-phospho-L-threonyl-[protein] + ADP + H(+). Its activity is regulated as follows. Activated by phosphorylation at Ser-355. May be activated by svh-2-mediated phosphorylation. In terms of biological role, serine/threonine-protein kinase which, by phosphorylating and activating mek-1, plays an important role in the activation of the JNK pathway composed of mlk-1, mek-1 and kgb-1. Involved in the response to environmental stress such as heavy metals. By activating the JNK pathway downstream of tyrosine receptor svh-2, plays a role in axon regeneration after injury. The protein is Mitogen-activated protein kinase kinase kinase mlk-1 of Caenorhabditis elegans.